The chain runs to 339 residues: UDP-N-acetylenolpyruvoylglucosamine reductase (339 aa).

The 171-residue stretch at 19–189 (VDVQARLFAQ…LRVRFKLSRE (171 aa)) folds into the FAD-binding PCMH-type domain. Arg-166 is an active-site residue. The active-site Proton donor is the Ser-239. Glu-335 is a catalytic residue.

Belongs to the MurB family. FAD serves as cofactor.

It is found in the cytoplasm. It catalyses the reaction UDP-N-acetyl-alpha-D-muramate + NADP(+) = UDP-N-acetyl-3-O-(1-carboxyvinyl)-alpha-D-glucosamine + NADPH + H(+). The protein operates within cell wall biogenesis; peptidoglycan biosynthesis. Cell wall formation. This Pseudomonas syringae pv. tomato (strain ATCC BAA-871 / DC3000) protein is UDP-N-acetylenolpyruvoylglucosamine reductase.